Reading from the N-terminus, the 234-residue chain is Peptidase E (234 aa).

Residues Ser-120, Asp-135, and His-157 each act as charge relay system in the active site.

The protein belongs to the peptidase S51 family.

It localises to the cytoplasm. It catalyses the reaction Dipeptidase E catalyzes the hydrolysis of dipeptides Asp-|-Xaa. It does not act on peptides with N-terminal Glu, Asn or Gln, nor does it cleave isoaspartyl peptides.. Its function is as follows. Hydrolyzes dipeptides containing N-terminal aspartate residues. May play a role in allowing the cell to use peptide aspartate to spare carbon otherwise required for the synthesis of the aspartate family of amino acids. The polypeptide is Peptidase E (Salmonella gallinarum (strain 287/91 / NCTC 13346)).